We begin with the raw amino-acid sequence, 158 residues long: Siroheme decarboxylase beta subunit (158 aa).

Belongs to the Ahb/Nir family. In terms of assembly, forms a heterodimer composed of AhbA and AhbB.

It catalyses the reaction siroheme + 2 H(+) = 12,18-didecarboxysiroheme + 2 CO2. It participates in porphyrin-containing compound metabolism; protoheme biosynthesis. Its function is as follows. Involved in siroheme-dependent heme b biosynthesis. Catalyzes the decarboxylation of siroheme into didecarboxysiroheme. This chain is Siroheme decarboxylase beta subunit, found in Oleidesulfovibrio alaskensis (strain ATCC BAA-1058 / DSM 17464 / G20) (Desulfovibrio alaskensis).